The primary structure comprises 153 residues: 17.6 kDa class I heat shock protein (153 aa).

In terms of domain architecture, sHSP spans Glu38–Gly153.

The protein belongs to the small heat shock protein (HSP20) family. In terms of assembly, forms oligomeric structures.

It localises to the cytoplasm. In Helianthus annuus (Common sunflower), this protein is 17.6 kDa class I heat shock protein (HSP17.6).